The chain runs to 332 residues: Casein kinase I isoform 2 (332 aa).

The Protein kinase domain occupies F11–F282. Residues I17–I25 and K40 each bind ATP. Residue D133 is the Proton acceptor of the active site. The segment at E306–V332 is disordered. The span at Q311–Q320 shows a compositional bias: low complexity. Residues R322–V332 show a composition bias toward basic and acidic residues.

Belongs to the protein kinase superfamily. Ser/Thr protein kinase family. The cofactor is Mg(2+).

It catalyses the reaction L-seryl-[protein] + ATP = O-phospho-L-seryl-[protein] + ADP + H(+). The enzyme catalyses L-threonyl-[protein] + ATP = O-phospho-L-threonyl-[protein] + ADP + H(+). Serine/threonine protein kinase. May phosphorylate ZC3H11 during unstressed conditions, leading to proteasome-dependent degradation of ZC3H11. This chain is Casein kinase I isoform 2, found in Trypanosoma brucei brucei.